The primary structure comprises 64 residues: Large ribosomal subunit protein bL35 (64 aa).

The protein belongs to the bacterial ribosomal protein bL35 family.

This chain is Large ribosomal subunit protein bL35, found in Shewanella sediminis (strain HAW-EB3).